The chain runs to 170 residues: ATP synthase subunit b (170 aa).

A helical membrane pass occupies residues 15 to 37; sequence FNLFETNILNWAVVVFGLYKFLP.

This sequence belongs to the ATPase B chain family. As to quaternary structure, F-type ATPases have 2 components, F(1) - the catalytic core - and F(0) - the membrane proton channel. F(1) has five subunits: alpha(3), beta(3), gamma(1), delta(1), epsilon(1). F(0) has four main subunits: a(1), b(1), b'(1) and c(10-14). The alpha and beta chains form an alternating ring which encloses part of the gamma chain. F(1) is attached to F(0) by a central stalk formed by the gamma and epsilon chains, while a peripheral stalk is formed by the delta, b and b' chains.

It is found in the cellular thylakoid membrane. F(1)F(0) ATP synthase produces ATP from ADP in the presence of a proton or sodium gradient. F-type ATPases consist of two structural domains, F(1) containing the extramembraneous catalytic core and F(0) containing the membrane proton channel, linked together by a central stalk and a peripheral stalk. During catalysis, ATP synthesis in the catalytic domain of F(1) is coupled via a rotary mechanism of the central stalk subunits to proton translocation. Its function is as follows. Component of the F(0) channel, it forms part of the peripheral stalk, linking F(1) to F(0). The chain is ATP synthase subunit b from Prochlorococcus marinus (strain MIT 9312).